Consider the following 356-residue polypeptide: Replication factor C subunit 3 (356 aa).

Lysine 20 carries the post-translational modification N6-acetyllysine. Serine 125 carries the post-translational modification Phosphoserine.

Belongs to the activator 1 small subunits family. In terms of assembly, subunit of the RFC complex, an heteropentameric complex consisting of a large subunit RFC1 and four small subunits RFC2, RFC3, RFC4 and RFC5; the RFC complex interacts with PCNA. Forms an heterotetrameric complex with RFC2, RFC4 and RFC5; this complex has ATPase activity but is not stimulated by PCNA. The heterotetramer of subunits RFC2, RFC3, RFC4 and RFC5 interacts with RAD17. Interacts with CNTD1; this interaction facilitates crossover formation.

Its subcellular location is the nucleus. Subunit of the replication factor C (RFC) complex which acts during elongation of primed DNA templates by DNA polymerases delta and epsilon, and is necessary for ATP-dependent loading of proliferating cell nuclear antigen (PCNA) onto primed DNA. This chain is Replication factor C subunit 3 (RFC3), found in Bos taurus (Bovine).